The chain runs to 253 residues: uncharacterized protein (253 aa).

The first 25 residues, 1-25, serve as a signal peptide directing secretion; sequence MRKKKFLSKVSFGSLFLLCGTVLSA. Cys-26 carries the N-palmitoyl cysteine lipid modification. A lipid anchor (S-diacylglycerol cysteine) is attached at Cys-26.

Belongs to the MG439/MG440 family.

Its subcellular location is the cell membrane. This is an uncharacterized protein from Mycoplasma pneumoniae (strain ATCC 29342 / M129 / Subtype 1) (Mycoplasmoides pneumoniae).